Reading from the N-terminus, the 237-residue chain is Orotidine 5'-phosphate decarboxylase (237 aa).

Residues Asp-11, Lys-34, 61 to 70 (DLKLHDIPNT), Thr-124, Arg-186, Gln-195, Gly-215, and Arg-216 contribute to the substrate site. Lys-63 serves as the catalytic Proton donor.

The protein belongs to the OMP decarboxylase family. Type 1 subfamily. Homodimer.

The enzyme catalyses orotidine 5'-phosphate + H(+) = UMP + CO2. It functions in the pathway pyrimidine metabolism; UMP biosynthesis via de novo pathway; UMP from orotate: step 2/2. Catalyzes the decarboxylation of orotidine 5'-monophosphate (OMP) to uridine 5'-monophosphate (UMP). In Lactococcus lactis subsp. lactis (strain IL1403) (Streptococcus lactis), this protein is Orotidine 5'-phosphate decarboxylase.